The sequence spans 278 residues: Large ribosomal subunit protein uL2 (278 aa).

Disordered stretches follow at residues 29-55 (PEKSLVRPLHSKGGRNNAGRITVRHQG) and 225-278 (VMNP…NKKR). A compositionally biased stretch (basic residues) spans 258-278 (RSNKKASNKYIVRRRTKNKKR).

It belongs to the universal ribosomal protein uL2 family. In terms of assembly, part of the 50S ribosomal subunit. Forms a bridge to the 30S subunit in the 70S ribosome. Post-translationally, the N-terminus is blocked. Phosphorylated on serine and threonine residues.

Functionally, one of the primary rRNA binding proteins. Required for association of the 30S and 50S subunits to form the 70S ribosome, for tRNA binding and peptide bond formation. It has been suggested to have peptidyltransferase activity; this is somewhat controversial. Makes several contacts with the 16S rRNA in the 70S ribosome. This chain is Large ribosomal subunit protein uL2, found in Streptomyces collinus.